The primary structure comprises 202 residues: Orotate phosphoribosyltransferase (202 aa).

Residues Lys93 and 113 to 121 each bind 5-phospho-alpha-D-ribose 1-diphosphate; that span reads EDIITTGGS. The orotate site is built by Thr117 and Arg145.

This sequence belongs to the purine/pyrimidine phosphoribosyltransferase family. PyrE subfamily. As to quaternary structure, homodimer. It depends on Mg(2+) as a cofactor.

It carries out the reaction orotidine 5'-phosphate + diphosphate = orotate + 5-phospho-alpha-D-ribose 1-diphosphate. Its pathway is pyrimidine metabolism; UMP biosynthesis via de novo pathway; UMP from orotate: step 1/2. Its function is as follows. Catalyzes the transfer of a ribosyl phosphate group from 5-phosphoribose 1-diphosphate to orotate, leading to the formation of orotidine monophosphate (OMP). This is Orotate phosphoribosyltransferase from Campylobacter jejuni subsp. jejuni serotype O:23/36 (strain 81-176).